A 106-amino-acid chain; its full sequence is Toxin-like structure LSTX-D8 (106 aa).

The signal sequence occupies residues 1–20; that stretch reads MTKVLVVVALLVTLISYSSS. A propeptide spanning residues 21–41 is cleaved from the precursor; the sequence is EGIDDLEADELLSLMANEQTR. 4 disulfide bridges follow: C45/C60, C52/C69, C59/C85, and C71/C83.

This sequence belongs to the neurotoxin 19 (CSTX) family. 02 (D7) subfamily. As to expression, expressed by the venom gland.

The protein resides in the secreted. In Lycosa singoriensis (Wolf spider), this protein is Toxin-like structure LSTX-D8.